The chain runs to 403 residues: Dynactin subunit 2-B (403 aa).

Positions 1-26 (MADPKYADLPGIARNEPDLYETSDLP) are disordered. Residues 99-132 (PQQKYQRLLHEVQELTQEVEKTQSTLKESATEEK) are a coiled coil. Residues 183–206 (AAKTRKDPEGKSSAKGPGPDNENL) are disordered. Residues 184–194 (AKTRKDPEGKS) show a composition bias toward basic and acidic residues. Residues 381-401 (KENLATVEDNFSSIDGRIKKL) are a coiled coil.

The protein belongs to the dynactin subunit 2 family. As to quaternary structure, subunit of dynactin, a multiprotein complex part of a tripartite complex with dynein and a adapter, such as BICDL1, BICD2 or HOOK3. The dynactin complex is built around ACTR1A/ACTB filament and consists of an actin-related filament composed of a shoulder domain, a pointed end and a barbed end. Its length is defined by its flexible shoulder domain. The soulder is composed of 2 DCTN1 subunits, 4 DCTN2 and 2 DCTN3.

It localises to the cytoplasm. Its subcellular location is the cytoskeleton. The protein resides in the microtubule organizing center. It is found in the centrosome. The protein localises to the membrane. Functionally, part of the dynactin complex that activates the molecular motor dynein for ultra-processive transport along microtubules. In the dynactin soulder domain, binds the ACTR1A filament and acts as a molecular ruler to determine the length. Modulates cytoplasmic dynein binding to an organelle, and plays a role in prometaphase chromosome alignment and spindle organization during mitosis. Involved in anchoring microtubules to centrosomes. In Xenopus laevis (African clawed frog), this protein is Dynactin subunit 2-B (dctn2-b).